The following is a 734-amino-acid chain: Photosystem I P700 chlorophyll a apoprotein A2 (734 aa).

Helical transmembrane passes span 46 to 69 (IFASHFGHLAIIFLWTSGNLFHVA), 135 to 158 (LYFGALGLLVLSTTLLFAGWLHLQ), 175 to 199 (LNHHLSGLFGVSSLAWSGHLIHVAI), 273 to 291 (IAHHHLAIAVVFIFAGHMY), 330 to 353 (LHMQLGLALASLGVATSLVAQHMY), 369 to 395 (AALYTHHQYIAGFLMVGAFAHGAIFFV), 417 to 439 (AIISHLSWVSLFLGFHTLGLYIH), and 517 to 535 (FLVHHAIALGLHTTTLILV). Residues Cys-559 and Cys-568 each coordinate [4Fe-4S] cluster. Transmembrane regions (helical) follow at residues 575-596 (AFYLAMFWMLNTISWVTFYWHW) and 643-665 (QAVWAWMFLFGHLIWATGFMFLI). Chlorophyll a is bound by residues His-654, Met-662, and Tyr-670. Trp-671 lines the phylloquinone pocket. The helical transmembrane segment at 707–727 (LVGLAHFTVGFIFTFAPFVIA) threads the bilayer.

The protein belongs to the PsaA/PsaB family. In terms of assembly, the PsaA/B heterodimer binds the P700 chlorophyll special pair and subsequent electron acceptors. PSI consists of a core antenna complex that captures photons, and an electron transfer chain that converts photonic excitation into a charge separation. The eukaryotic PSI reaction center is composed of at least 11 subunits. P700 is a chlorophyll a/chlorophyll a' dimer, A0 is one or more chlorophyll a, A1 is one or both phylloquinones and FX is a shared 4Fe-4S iron-sulfur center. serves as cofactor.

The protein resides in the plastid. The protein localises to the chloroplast thylakoid membrane. It catalyses the reaction reduced [plastocyanin] + hnu + oxidized [2Fe-2S]-[ferredoxin] = oxidized [plastocyanin] + reduced [2Fe-2S]-[ferredoxin]. PsaA and PsaB bind P700, the primary electron donor of photosystem I (PSI), as well as the electron acceptors A0, A1 and FX. PSI is a plastocyanin/cytochrome c6-ferredoxin oxidoreductase, converting photonic excitation into a charge separation, which transfers an electron from the donor P700 chlorophyll pair to the spectroscopically characterized acceptors A0, A1, FX, FA and FB in turn. Oxidized P700 is reduced on the lumenal side of the thylakoid membrane by plastocyanin or cytochrome c6. The chain is Photosystem I P700 chlorophyll a apoprotein A2 from Emiliania huxleyi (Coccolithophore).